Reading from the N-terminus, the 129-residue chain is Phosphoribosyl-AMP cyclohydrolase (129 aa).

Position 84 (Asp-84) interacts with Mg(2+). Cys-85 is a binding site for Zn(2+). Positions 86 and 88 each coordinate Mg(2+). 2 residues coordinate Zn(2+): Cys-101 and Cys-108.

It belongs to the PRA-CH family. In terms of assembly, homodimer. Mg(2+) serves as cofactor. It depends on Zn(2+) as a cofactor.

It is found in the cytoplasm. The catalysed reaction is 1-(5-phospho-beta-D-ribosyl)-5'-AMP + H2O = 1-(5-phospho-beta-D-ribosyl)-5-[(5-phospho-beta-D-ribosylamino)methylideneamino]imidazole-4-carboxamide. The protein operates within amino-acid biosynthesis; L-histidine biosynthesis; L-histidine from 5-phospho-alpha-D-ribose 1-diphosphate: step 3/9. Catalyzes the hydrolysis of the adenine ring of phosphoribosyl-AMP. This chain is Phosphoribosyl-AMP cyclohydrolase, found in Halobacterium salinarum (strain ATCC 700922 / JCM 11081 / NRC-1) (Halobacterium halobium).